A 662-amino-acid polypeptide reads, in one-letter code: F-box/WD repeat-containing protein pof10 (662 aa).

Positions 1 to 16 (MKSEPTSLDFTSSNLR) are enriched in polar residues. Residues 1–27 (MKSEPTSLDFTSSNLRRMNRDHSSNNT) are disordered. Residues 28 to 74 (NRTVLNLPKEILIIIFSFLDPRSLLSAQCTCKYWKKLLSDDLSWRTA) form the F-box domain. 3 WD repeats span residues 215–260 (SHAD…SLQS), 263–302 (FRSSQILSLCFRPKYKMLLVDTFNYELNSYQLYLIPGYAR), and 429–468 (TAYSNFPITDIYLNEVAMVVGSASGYCGVYDTVTGNFLKK). Positions 581–600 (SEEEIIAYVTMLSQEEEAKR) constitute a UIM 1 domain. A disordered region spans residues 617–645 (ENDEQATSSLNALSSNHEPPQEQANVAEL). Positions 621-640 (QATSSLNALSSNHEPPQEQA) are enriched in polar residues. Positions 646–662 (NEQEQIELAMRLSLMEM) constitute a UIM 2 domain.

As to quaternary structure, part of a SCF (SKP1-cullin-F-box) protein ligase complex. Interacts with skp1.

It localises to the cytoplasm. Probably recognizes and binds to some phosphorylated proteins and promotes their ubiquitination and degradation. The sequence is that of F-box/WD repeat-containing protein pof10 (pof10) from Schizosaccharomyces pombe (strain 972 / ATCC 24843) (Fission yeast).